A 249-amino-acid chain; its full sequence is 2,3-bisphosphoglycerate-dependent phosphoglycerate mutase (249 aa).

Substrate is bound by residues 8 to 15 (RHGESTWN), 21 to 22 (TG), arginine 60, 87 to 90 (ERHY), lysine 98, 114 to 115 (RR), and 183 to 184 (GN). Histidine 9 functions as the Tele-phosphohistidine intermediate in the catalytic mechanism. Glutamate 87 acts as the Proton donor/acceptor in catalysis.

It belongs to the phosphoglycerate mutase family. BPG-dependent PGAM subfamily.

The enzyme catalyses (2R)-2-phosphoglycerate = (2R)-3-phosphoglycerate. The protein operates within carbohydrate degradation; glycolysis; pyruvate from D-glyceraldehyde 3-phosphate: step 3/5. Functionally, catalyzes the interconversion of 2-phosphoglycerate and 3-phosphoglycerate. The polypeptide is 2,3-bisphosphoglycerate-dependent phosphoglycerate mutase (Methanoregula boonei (strain DSM 21154 / JCM 14090 / 6A8)).